The following is a 127-amino-acid chain: Apolipoprotein C-IV (127 aa).

The N-terminal stretch at 1–27 (MSLLRNRLQDLPALCLCVLVLACIGAC) is a signal peptide. A glycan (N-linked (GlcNAc...) asparagine) is linked at N63.

It belongs to the apolipoprotein C4 family.

The protein resides in the secreted. In terms of biological role, may participate in lipoprotein metabolism. The protein is Apolipoprotein C-IV (APOC4) of Colobus guereza (Mantled guereza).